The sequence spans 574 residues: Excitatory amino acid transporter 2 (574 aa).

The Cytoplasmic portion of the chain corresponds to 1–44 (MASTEGANNMPKQVEVRMHDSHLGSEEPKHRHLGLRLCDKLGKN). Phosphoserine is present on residues Ser-3, Ser-21, and Ser-25. Cys-38 carries the S-palmitoyl cysteine lipid modification. A helical membrane pass occupies residues 45–64 (LLLTLTVFGVILGAVCGGLL). At 65–87 (RLASPIHPDVVMLIAFPGDILMR) the chain is on the extracellular side. The helical transmembrane segment at 88-108 (MLKMLILPLIISSLITGLSGL) threads the bilayer. Over 109 to 120 (DAKASGRLGTRA) the chain is Cytoplasmic. A helical membrane pass occupies residues 121–142 (MVYYMSTTIIAAVLGVILVLAI). Residues 143–235 (HPGNPKLKKQ…TKMVIKKGLE (93 aa)) are Extracellular-facing. 2 N-linked (GlcNAc...) asparagine glycosylation sites follow: Asn-206 and Asn-216. The chain crosses the membrane as a helical span at residues 236–259 (FKDGMNVLGLIGFFIAFGIAMGKM). Over 260-268 (GDQAKLMVD) the chain is Cytoplasmic. A helical transmembrane segment spans residues 269–296 (FFNILNEIVMKLVIMIMWYSPLGIACLI). At 297-317 (CGKIIAIKDLEVVARQLGMYM) the chain is on the extracellular side. Residues 318–339 (VTVIIGLIIHGGIFLPLIYFVV) form a helical membrane-spanning segment. At 340-344 (TRKNP) the chain is on the cytoplasmic side. Positions 345–375 (FSFFAGIFQAWITALGTASSAGTLPVTFRCL) form an intramembrane region, discontinuously helical. 362–364 (ASS) contacts L-aspartate. At 376 to 384 (EENLGIDKR) the chain is on the cytoplasmic side. The helical transmembrane segment at 385-411 (VTRFVLPVGATINMDGTALYEAVAAIF) threads the bilayer. Residues Gly-393, Thr-395, and Asn-397 each coordinate Na(+). Position 401 (Thr-401) interacts with L-aspartate. Topologically, residues 412–424 (IAQMNGVVLDGGQ) are extracellular. Positions 425 to 458 (IVTVSLTATLASVGAASIPSAGLVTMLLILTAVG) form an intramembrane region, discontinuously helical. 442-446 (IPSAG) is an L-aspartate binding site. The Extracellular portion of the chain corresponds to 459 to 471 (LPTEDISLLVAVD). Residues 472 to 493 (WLLDRMRTSVNVVGDSFGAGIV) traverse the membrane as a helical segment. Residues Asp-475 and Asn-482 each coordinate L-aspartate. Na(+) contacts are provided by Asn-482 and Asp-486. At 494-574 (YHLSKSELDT…VEEEPWKREK (81 aa)) the chain is on the cytoplasmic side. Residues Ser-506, Ser-521, Ser-532, and Ser-534 each carry the phosphoserine modification. Phosphotyrosine is present on Tyr-539. A phosphoserine mark is found at Ser-544, Ser-560, and Ser-564.

Belongs to the dicarboxylate/amino acid:cation symporter (DAACS) (TC 2.A.23) family. SLC1A2 subfamily. In terms of assembly, homotrimer. Isoform 3 can oligomerize with isoform 1. Interacts with AJUBA. In terms of processing, glycosylated. Palmitoylation at Cys-38 is not required for correct subcellular localization, but is important for glutamate uptake activity.

The protein localises to the cell membrane. It carries out the reaction K(+)(in) + L-glutamate(out) + 3 Na(+)(out) + H(+)(out) = K(+)(out) + L-glutamate(in) + 3 Na(+)(in) + H(+)(in). It catalyses the reaction K(+)(in) + L-aspartate(out) + 3 Na(+)(out) + H(+)(out) = K(+)(out) + L-aspartate(in) + 3 Na(+)(in) + H(+)(in). The catalysed reaction is D-aspartate(out) + K(+)(in) + 3 Na(+)(out) + H(+)(out) = D-aspartate(in) + K(+)(out) + 3 Na(+)(in) + H(+)(in). In terms of biological role, sodium-dependent, high-affinity amino acid transporter that mediates the uptake of L-glutamate and also L-aspartate and D-aspartate. Functions as a symporter that transports one amino acid molecule together with two or three Na(+) ions and one proton, in parallel with the counter-transport of one K(+) ion. Mediates Cl(-) flux that is not coupled to amino acid transport; this avoids the accumulation of negative charges due to aspartate and Na(+) symport. Essential for the rapid removal of released glutamate from the synaptic cleft, and for terminating the postsynaptic action of glutamate. In Homo sapiens (Human), this protein is Excitatory amino acid transporter 2.